The chain runs to 287 residues: Octanoyl-[GcvH]:protein N-octanoyltransferase (287 aa).

Positions 45–253 constitute a BPL/LPL catalytic domain; that stretch reads GESPATARSW…ELKELSGRLY (209 aa). The active-site Acyl-thioester intermediate is the C150.

The protein belongs to the octanoyltransferase LipL family.

The enzyme catalyses N(6)-octanoyl-L-lysyl-[glycine-cleavage complex H protein] + L-lysyl-[lipoyl-carrier protein] = N(6)-octanoyl-L-lysyl-[lipoyl-carrier protein] + L-lysyl-[glycine-cleavage complex H protein]. It functions in the pathway protein modification; protein lipoylation via endogenous pathway; protein N(6)-(lipoyl)lysine from octanoyl-[acyl-carrier-protein]. In terms of biological role, catalyzes the amidotransfer (transamidation) of the octanoyl moiety from octanoyl-GcvH to the lipoyl domain of the E2 subunit of lipoate-dependent enzymes. The polypeptide is Octanoyl-[GcvH]:protein N-octanoyltransferase (Bacillus velezensis (strain DSM 23117 / BGSC 10A6 / LMG 26770 / FZB42) (Bacillus amyloliquefaciens subsp. plantarum)).